The primary structure comprises 120 residues: NAD(P)H-quinone oxidoreductase subunit 3, chloroplastic (120 aa).

Transmembrane regions (helical) follow at residues 9–29, 64–84, and 88–108; these read IFWAFLMISSVIPILAFLISG, MFALVFVVFDVETVFLYPWAV, and ILGVYVFIEALIFVLIPVVGS.

This sequence belongs to the complex I subunit 3 family. As to quaternary structure, NDH is composed of at least 16 different subunits, 5 of which are encoded in the nucleus.

The protein resides in the plastid. Its subcellular location is the chloroplast thylakoid membrane. The enzyme catalyses a plastoquinone + NADH + (n+1) H(+)(in) = a plastoquinol + NAD(+) + n H(+)(out). It carries out the reaction a plastoquinone + NADPH + (n+1) H(+)(in) = a plastoquinol + NADP(+) + n H(+)(out). NDH shuttles electrons from NAD(P)H:plastoquinone, via FMN and iron-sulfur (Fe-S) centers, to quinones in the photosynthetic chain and possibly in a chloroplast respiratory chain. The immediate electron acceptor for the enzyme in this species is believed to be plastoquinone. Couples the redox reaction to proton translocation, and thus conserves the redox energy in a proton gradient. The polypeptide is NAD(P)H-quinone oxidoreductase subunit 3, chloroplastic (Nymphaea alba (White water-lily)).